The primary structure comprises 362 residues: Cytoskeleton protein RodZ (362 aa).

Topologically, residues M1–G111 are cytoplasmic. The region spanning L19–L79 is the HTH cro/C1-type domain. The segment at residues Q30–E49 is a DNA-binding region (H-T-H motif). Residues W112 to W132 form a helical; Signal-anchor for type II membrane protein membrane-spanning segment. The Periplasmic portion of the chain corresponds to W133–E362. Residues S151–G277 are disordered. Low complexity predominate over residues S193 to T221. A compositionally biased stretch (polar residues) spans V223 to H242. A compositionally biased stretch (low complexity) spans A246–P259.

This sequence belongs to the RodZ family.

It localises to the cell inner membrane. Functionally, cytoskeletal protein that is involved in cell-shape control through regulation of the length of the long axis. This chain is Cytoskeleton protein RodZ, found in Yersinia pseudotuberculosis serotype IB (strain PB1/+).